Reading from the N-terminus, the 369-residue chain is Putative transport protein YueF (369 aa).

The next 8 helical transmembrane spans lie at 13–33 (ILFV…FQPF), 34–54 (IVFI…YFIF), 73–93 (LIYL…GPII), 159–179 (AVFG…FILF), 213–233 (DTLA…GTAC), 234–254 (FIGY…VMAI), 271–291 (VIVG…VVVI), and 316–336 (IILL…ILAV).

This sequence belongs to the autoinducer-2 exporter (AI-2E) (TC 2.A.86) family.

The protein localises to the cell membrane. The chain is Putative transport protein YueF (yueF) from Bacillus subtilis (strain 168).